A 626-amino-acid polypeptide reads, in one-letter code: Polypeptide N-acetylgalactosaminyltransferase 5 (626 aa).

At 1 to 11 (MIIFKKKAILK) the chain is on the cytoplasmic side. Residues 12 to 31 (VLLLVPVFWICSLIFFAATS) traverse the membrane as a helical; Signal-anchor for type II membrane protein segment. Asn-32 carries an N-linked (GlcNAc...) asparagine glycan. Residues 32–626 (NDSSQIGSNN…AIEHGAKPPS (595 aa)) lie on the Lumenal side of the membrane. 5 disulfide bridges follow: Cys-165–Cys-399, Cys-390–Cys-466, Cys-502–Cys-521, Cys-544–Cys-557, and Cys-583–Cys-598. The interval 174–284 (LPRTSVIICF…EGWMEPLLDR (111 aa)) is catalytic subdomain A. 2 residues coordinate substrate: Asp-215 and Arg-245. Mn(2+) is bound at residue Asp-268. Position 269 (Ser-269) interacts with substrate. His-270 is a binding site for Mn(2+). A glycan (N-linked (GlcNAc...) asparagine) is linked at Asn-338. Residues 345-407 (PVRSPTMAGG…PCSHVGHVFR (63 aa)) are catalytic subdomain B. Substrate is bound at residue Trp-376. His-404 contacts Mn(2+). Substrate contacts are provided by Arg-407 and Tyr-412. The Ricin B-type lectin domain occupies 488–610 (AKGEVRNSAV…DDPYQHWKFK (123 aa)).

It belongs to the glycosyltransferase 2 family. GalNAc-T subfamily. Requires Mn(2+) as cofactor.

It is found in the golgi apparatus membrane. It carries out the reaction L-seryl-[protein] + UDP-N-acetyl-alpha-D-galactosamine = a 3-O-[N-acetyl-alpha-D-galactosaminyl]-L-seryl-[protein] + UDP + H(+). The catalysed reaction is L-threonyl-[protein] + UDP-N-acetyl-alpha-D-galactosamine = a 3-O-[N-acetyl-alpha-D-galactosaminyl]-L-threonyl-[protein] + UDP + H(+). Its pathway is protein modification; protein glycosylation. In terms of biological role, catalyzes the initial reaction in O-linked oligosaccharide biosynthesis, the transfer of an N-acetyl-D-galactosamine residue to a serine or threonine residue on the protein receptor. The sequence is that of Polypeptide N-acetylgalactosaminyltransferase 5 (gly-5) from Caenorhabditis elegans.